The following is an 806-amino-acid chain: Integrin beta-7 (806 aa).

A signal peptide spans 1–19; it reads MVDSSTVLIFLLVLGGGQS. At 20-724 the chain is on the extracellular side; that stretch reads ELDTKITSSG…PQEKGVDHTR (705 aa). The region spanning 44–92 is the PSI domain; sequence SCQPVPSCQKCILSHPSCAWCKQLNFTASGEAEARRCARREELLARGCP. Disulfide bonds link Cys-51/Cys-476, Cys-54/Cys-80, Cys-64/Cys-91, Cys-216/Cys-223, Cys-271/Cys-311, Cys-412/Cys-428, Cys-448/Cys-474, Cys-478/Cys-497, Cys-488/Cys-500, Cys-502/Cys-511, Cys-513/Cys-545, Cys-527/Cys-543, Cys-537/Cys-548, Cys-550/Cys-559, Cys-561/Cys-582, Cys-566/Cys-580, Cys-574/Cys-585, Cys-587/Cys-596, Cys-598/Cys-621, Cys-605/Cys-619, Cys-613/Cys-624, Cys-626/Cys-635, Cys-638/Cys-641, Cys-645/Cys-688, Cys-651/Cys-670, and Cys-654/Cys-666. Asn-68 carries an N-linked (GlcNAc...) asparagine glycan. Basic and acidic residues predominate over residues 98–107; that stretch reads EPRGRQEVLQ. The interval 98–123 is disordered; that stretch reads EPRGRQEVLQDKPLSQGDRGEGATQL. A VWFA domain is found at 150–389; the sequence is YPVDLYYLMD…QLIMDAYDSL (240 aa). Ser-161 and Ser-163 together coordinate Mg(2+). The Ca(2+) site is built by Ser-163, Asp-166, Asp-167, and Asp-198. Asn-250 carries N-linked (GlcNAc...) asparagine glycosylation. Residues Asn-254, Asp-256, Pro-258, and Glu-259 each coordinate Ca(2+). A Mg(2+)-binding site is contributed by Glu-259. N-linked (GlcNAc...) asparagine glycosylation occurs at Asn-279. Positions 289 and 373 each coordinate Ca(2+). Asn-434 carries N-linked (GlcNAc...) asparagine glycosylation. I-EGF domains lie at 478 to 512, 513 to 560, 561 to 597, and 598 to 636; these read CGDA…QLCE, CSEA…RLCE, CDDA…RACE, and CSKS…ALCD. A glycan (N-linked (GlcNAc...) asparagine) is linked at Asn-531. The N-linked (GlcNAc...) asparagine glycan is linked to Asn-590. Asn-665 and Asn-674 each carry an N-linked (GlcNAc...) asparagine glycan. Residues 725–745 traverse the membrane as a helical segment; the sequence is AIILGCTGGIVAVGLGLVLAY. Over 746-806 the chain is Cytoplasmic; it reads RLSVEIYDRR…PSLSLTREAD (61 aa). Positions 786–806 are disordered; that stretch reads NPRFQGTNGRSPSLSLTREAD.

It belongs to the integrin beta chain family. Heterodimer of an alpha and a beta subunit. ITGB7/beta-7 associates with either ITGA4/alpha-4 or ITGAE/alpha-E. Integrin ITGA4/ITGB7 interacts with MADCAM1. Integrin ITGA4/ITGB7 interacts with VCAM1 and fibronectin. Interacts with FLNA (via filamin repeats 4, 9, 12, 17, 19, 21, and 23).

The protein localises to the cell membrane. In terms of biological role, integrin ITGA4/ITGB7 (alpha-4/beta-7) (Peyer patches-specific homing receptor LPAM-1) is an adhesion molecule that mediates lymphocyte migration and homing to gut-associated lymphoid tissue (GALT). Integrin ITGA4/ITGB7 interacts with the cell surface adhesion molecules MADCAM1 which is normally expressed by the vascular endothelium of the gastrointestinal tract. Also interacts with VCAM1 and fibronectin, an extracellular matrix component. It recognizes one or more domains within the alternatively spliced CS-1 region of fibronectin. Interactions involve the tripeptide L-D-T in MADCAM1, and L-D-V in fibronectin. Integrin ITGAE/ITGB7 (alpha-E/beta-7, HML-1) is a receptor for E-cadherin. The sequence is that of Integrin beta-7 (Itgb7) from Mus musculus (Mouse).